The primary structure comprises 349 residues: uncharacterized protein (349 aa).

This is an uncharacterized protein from Archaeoglobus fulgidus (strain ATCC 49558 / DSM 4304 / JCM 9628 / NBRC 100126 / VC-16).